The following is a 336-amino-acid chain: Fructose-1,6-bisphosphatase class 1 (336 aa).

Mg(2+) is bound by residues Glu90, Asp112, Leu114, and Asp115. Residues 115–118 (DGSS), Asn211, and Lys277 contribute to the substrate site. Glu283 provides a ligand contact to Mg(2+).

Belongs to the FBPase class 1 family. As to quaternary structure, homotetramer. The cofactor is Mg(2+).

It is found in the cytoplasm. The catalysed reaction is beta-D-fructose 1,6-bisphosphate + H2O = beta-D-fructose 6-phosphate + phosphate. Its pathway is carbohydrate biosynthesis; gluconeogenesis. The protein is Fructose-1,6-bisphosphatase class 1 of Pseudomonas putida (strain GB-1).